The sequence spans 321 residues: Cytochrome f (321 aa).

A signal peptide spans 1–38 (MKKNFYTISKTMSRSLKLILFSVFIGFSIFLIPQPTWA). Positions 39, 59, 62, and 63 each coordinate heme. Residues 288–308 (VIGMIIFFIGVGLSQIMLVLK) form a helical membrane-spanning segment.

Belongs to the cytochrome f family. As to quaternary structure, the 4 large subunits of the cytochrome b6-f complex are cytochrome b6, subunit IV (17 kDa polypeptide, PetD), cytochrome f and the Rieske protein, while the 4 small subunits are PetG, PetL, PetM and PetN. The complex functions as a dimer. It depends on heme as a cofactor.

It is found in the cellular thylakoid membrane. Component of the cytochrome b6-f complex, which mediates electron transfer between photosystem II (PSII) and photosystem I (PSI), cyclic electron flow around PSI, and state transitions. The polypeptide is Cytochrome f (Prochlorococcus marinus (strain NATL2A)).